An 805-amino-acid chain; its full sequence is Pentatricopeptide repeat-containing protein At4g01570 (805 aa).

16 PPR repeats span residues 91–125, 126–160, 161–196, 211–241, 247–277, 288–322, 323–357, 358–392, 393–427, 428–462, 463–497, 593–627, 629–663, 664–698, 699–733, and 734–768; these read SATAYSQIFRTVCRTGLLGEVPDLLGSMKEDGVNL, DQTMAKILLDSLIRSGKFESALGVLDYMEELGDCL, NPSVYDSVLIALVKKHELRLALSILFKLLEASDNHS, GTVAVNELLVGLRRADMRSEFKRVFEKLKGM, DTWSYNICIHGFGCWGDLDAALSLFKEMKER, DICTYNSLIHVLCLFGKAKDALIVWDELKVSGHEP, DNSTYRILIQGCCKSYRMDDAMRIYGEMQYNGFVP, DTIVYNCLLDGTLKARKVTEACQLFEKMVQEGVRA, SCWTYNILIDGLFRNGRAEAGFTLFCDLKKKGQFV, DAITFSIVGLQLCREGKLEGAVKLVEEMETRGFSV, DLVTISSLLIGFHKQGRWDWKEKLMKHIREGNLVP, DVDMMNTFLSIYLSKGDLSLACKLFEIFNGMGVTD, TSYTYNSMMSSFVKKGYFQTARGVLDQMFENFCAA, DIATYNVIIQGLGKMGRADLASAVLDRLTKQGGYL, DIVMYNTLINALGKATRLDEATQLFDHMKSNGINP, and DVVSYNTMIEVNSKAGKLKEAYKYLKAMLDAGCLP.

Belongs to the PPR family. P subfamily.

In Arabidopsis thaliana (Mouse-ear cress), this protein is Pentatricopeptide repeat-containing protein At4g01570.